Reading from the N-terminus, the 66-residue chain is Large ribosomal subunit protein uL30 (66 aa).

Belongs to the universal ribosomal protein uL30 family. Part of the 50S ribosomal subunit.

This Brucella anthropi (strain ATCC 49188 / DSM 6882 / CCUG 24695 / JCM 21032 / LMG 3331 / NBRC 15819 / NCTC 12168 / Alc 37) (Ochrobactrum anthropi) protein is Large ribosomal subunit protein uL30.